The sequence spans 141 residues: ATP synthase epsilon chain (141 aa).

The protein belongs to the ATPase epsilon chain family. As to quaternary structure, F-type ATPases have 2 components, CF(1) - the catalytic core - and CF(0) - the membrane proton channel. CF(1) has five subunits: alpha(3), beta(3), gamma(1), delta(1), epsilon(1). CF(0) has three main subunits: a, b and c.

It localises to the cell membrane. In terms of biological role, produces ATP from ADP in the presence of a proton gradient across the membrane. This is ATP synthase epsilon chain (atpC) from Mycoplasmopsis pulmonis (strain UAB CTIP) (Mycoplasma pulmonis).